The sequence spans 1918 residues: NFX1-type zinc finger-containing protein 1 (1918 aa).

Residues 1–12 show a composition bias toward basic and acidic residues; sequence MEERRPHLDARP. Disordered regions lie at residues 1–58 and 75–140; these read MEER…RANN and RNPH…QPQQ. The span at 30 to 42 shows a compositional bias: low complexity; sequence RARNQANNPPANA. Positions 82 to 105 are enriched in basic and acidic residues; sequence RNQEGHASDEARDQRHDQENDTRW. Residues 120–129 are compositionally biased toward polar residues; sequence SNDNFQQWRT. Residues 286 to 313 adopt a coiled-coil conformation; the sequence is DIEEETEKNLEKVQTIIEHLQEKRREGT. Disordered stretches follow at residues 796 to 819 and 876 to 896; these read SVSPAGPENTAQAEGDEEEEGEEE and TAAGQEQATGEWQTQRNQKKK. Residues 809–819 are compositionally biased toward acidic residues; it reads EGDEEEEGEEE. Residues 877–887 show a composition bias toward polar residues; the sequence is AAGQEQATGEW. Positions 886–967 form a coiled coil; that stretch reads EWQTQRNQKK…TSAERMAELR (82 aa). 6 NF-X1-type zinc fingers span residues 1298 to 1320, 1330 to 1346, 1382 to 1400, 1441 to 1463, 1471 to 1488, and 1546 to 1564; these read CGHVCTRACHPYDSSHKEFQCMK, GHRCPLVCFQECQPCQV, CGHRCSHPCGEDCVQLCSE, CGHPCPGSCHSCFEGRFHERCQQ, CSHKCQEPCIGECPPCQR, and CGHPCIGLCGEPCPKKCRI. A coiled-coil region spans residues 1741–1820; sequence LAKKRLSFTS…EKMEALKATL (80 aa). An RZ-type zinc finger spans residues 1827-1898; the sequence is ISEEERVQIV…LASEMDGAQH (72 aa). Zn(2+) is bound by residues cysteine 1849, histidine 1853, cysteine 1869, and cysteine 1872.

The protein belongs to the ZNFX1 family. As to quaternary structure, interacts with MAVS. In terms of tissue distribution, widely expressed.

Its subcellular location is the mitochondrion outer membrane. The protein localises to the cytoplasm. The protein resides in the stress granule. In terms of biological role, RNA-binding protein that initiates the antiviral response and is required to restrict the replication of RNA viruses. Acts as a double-stranded RNA (dsRNA) sensor that recognizes viral RNA and then interacts with MAVS to initiate the type I interferon response. Also required for immunity against some bacteria, such as mycobacteria. The sequence is that of NFX1-type zinc finger-containing protein 1 from Homo sapiens (Human).